Consider the following 62-residue polypeptide: Photosystem II reaction center protein Z (62 aa).

Transmembrane regions (helical) follow at residues 8–28 and 41–61; these read AVFA…VVFA and FSGT…NSLI.

Belongs to the PsbZ family. PSII is composed of 1 copy each of membrane proteins PsbA, PsbB, PsbC, PsbD, PsbE, PsbF, PsbH, PsbI, PsbJ, PsbK, PsbL, PsbM, PsbT, PsbY, PsbZ, Psb30/Ycf12, at least 3 peripheral proteins of the oxygen-evolving complex and a large number of cofactors. It forms dimeric complexes.

The protein resides in the plastid. The protein localises to the chloroplast thylakoid membrane. Its function is as follows. May control the interaction of photosystem II (PSII) cores with the light-harvesting antenna, regulates electron flow through the 2 photosystem reaction centers. PSII is a light-driven water plastoquinone oxidoreductase, using light energy to abstract electrons from H(2)O, generating a proton gradient subsequently used for ATP formation. The polypeptide is Photosystem II reaction center protein Z (Gossypium barbadense (Sea Island cotton)).